The sequence spans 375 residues: Putative F-box protein At5g52620 (375 aa).

In terms of domain architecture, F-box spans 5 to 52; the sequence is GKSDPIPIDIILDILSRLSTNSIAKFGLASKFCGSILRGQDFIELFLI.

The chain is Putative F-box protein At5g52620 from Arabidopsis thaliana (Mouse-ear cress).